A 225-amino-acid chain; its full sequence is LexA repressor (225 aa).

The H-T-H motif DNA-binding region spans 26–46; the sequence is YEEMKDSLNLKSKSGIHRLIS. Residues S146 and K184 each act as for autocatalytic cleavage activity in the active site.

It belongs to the peptidase S24 family. In terms of assembly, homodimer.

It catalyses the reaction Hydrolysis of Ala-|-Gly bond in repressor LexA.. Represses a number of genes involved in the response to DNA damage (SOS response), including recA and lexA. In the presence of single-stranded DNA, RecA interacts with LexA causing an autocatalytic cleavage which disrupts the DNA-binding part of LexA, leading to derepression of the SOS regulon and eventually DNA repair. The sequence is that of LexA repressor from Pelagibacter ubique (strain HTCC1062).